An 86-amino-acid polypeptide reads, in one-letter code: Large ribosomal subunit protein bL27 (86 aa).

A disordered region spans residues 1-24; it reads MAHKKGTGSTRNGRDSNSKRLGVK.

It belongs to the bacterial ribosomal protein bL27 family.

The protein is Large ribosomal subunit protein bL27 of Prochlorococcus marinus (strain AS9601).